We begin with the raw amino-acid sequence, 414 residues long: uncharacterized protein (414 aa).

Disordered stretches follow at residues 136–168 (SSKS…TVPT), 297–333 (PQNF…ENAS), and 346–414 (ALNA…NGSK). Polar residues predominate over residues 350–359 (PSRSRPTHGS). Basic and acidic residues predominate over residues 399-414 (SKSEKIYPEPRRNGSK).

This is an uncharacterized protein from Homo sapiens (Human).